Here is a 455-residue protein sequence, read N- to C-terminus: Protein FAM124B (455 aa).

The residue at position 49 (serine 49) is a Phosphoserine. Positions 270 to 322 (TSVSAKRTSEPRSQRNQGKRSQGHSLELPEPSGSPTSDRCAGTSWKSPGRSFQ) are disordered. Positions 313 to 322 (SWKSPGRSFQ) are enriched in polar residues.

This sequence belongs to the FAM124 family. Interacts with CHD7 and CHD8.

It localises to the nucleus. The protein is Protein FAM124B (FAM124B) of Homo sapiens (Human).